Reading from the N-terminus, the 155-residue chain is Egg-lysin (155 aa).

The signal sequence occupies residues 1-18 (MKLLVLCLFAMMATLAVS).

Monomer. Homodimer. Molecules associate into dimers and then rapidly dissociate again. Interacts (as a monomer) with the egg vitelline layer protein VERL (via VERL repeats); each VERL chain can bind multiple copies of lysin. As to expression, sperm (at protein level).

The protein resides in the cytoplasmic vesicle. The protein localises to the secretory vesicle. It localises to the acrosome lumen. Creates a 3 um hole in the egg vitelline layer through which the sperm passes. Does not have enzyme activity. Species-specific interaction between the sperm protein lysin and the egg protein VERL exposes a basic surface on lysin that may dissociate the egg vitelline layer via electrostatic repulsion. Plays a role in ensuring species-specific fertilization. This chain is Egg-lysin, found in Haliotis corrugata (Pink abalone).